Consider the following 1733-residue polypeptide: ATP-binding cassette sub-family A member 17 (1733 aa).

7 consecutive transmembrane segments (helical) span residues 22-42 (TLIT…VLYL), 262-282 (FPLL…NSVL), 306-326 (AWFI…TVLF), 342-362 (TLIF…AFMM), 372-392 (GTVI…YITF), 403-423 (ILSC…ISLF), and 444-464 (FAQV…IAFL). Residues 519 to 752 (IEIQHLYKVF…YGAGYYMTII (234 aa)) enclose the ABC transporter 1 domain. ATP is bound at residue 555-562 (GHNGAGKT). N-linked (GlcNAc...) asparagine glycosylation is present at asparagine 609. Transmembrane regions (helical) follow at residues 906–926 (LVLS…LTFF), 1082–1102 (LVVN…ILTV), 1128–1148 (LLWD…VFLW), 1160–1180 (IPAV…LVYT), 1192–1212 (CVKL…LVTV), 1230–1250 (IFLI…YYNF), and 1287–1307 (IGKY…MLFL). Residues 1366–1599 (LVVKEVSKVY…FGISYSLQAK (234 aa)) enclose the ABC transporter 2 domain. An ATP-binding site is contributed by 1401 to 1408 (GLNGAGKT). Polar residues predominate over residues 1681 to 1692 (ESSTKEQIQQEQ). A disordered region spans residues 1681–1733 (ESSTKEQIQQEQAVLASPSPPSNSRPISSPPSRLSSPTPKPLPSPPPSEPILL). Low complexity predominate over residues 1704 to 1717 (SRPISSPPSRLSSP). Residues 1718–1733 (TPKPLPSPPPSEPILL) are compositionally biased toward pro residues.

The protein belongs to the ABC transporter superfamily. ABCA family. Post-translationally, N-glycosylated. As to expression, in the testis, detected predominantly in elongated spermatids at the late stage of germ cell development and in sperm, with no expression detected in immature germ cells such as spermatogonia and spermatocytes or in somatic cells such as Sertoli cells (at protein level). Expressed in the head and tail midpiece of elongated spermatids and sperm (at protein level). Expressed exclusively in the testis.

It is found in the endoplasmic reticulum membrane. The protein resides in the cytoplasm. The enzyme catalyses cholesterol(in) + ATP + H2O = cholesterol(out) + ADP + phosphate + H(+). Functionally, promotes cholesterol efflux from sperm which renders sperm capable of fertilization. Has also been shown to decrease levels of intracellular esterified neutral lipids including cholesteryl esters, fatty acid esters and triacylglycerols. The protein is ATP-binding cassette sub-family A member 17 of Mus musculus (Mouse).